A 371-amino-acid chain; its full sequence is L-lysine 4-hydroxylase (371 aa).

The Fe cation site is built by histidine 174, glutamate 176, and histidine 310.

This sequence belongs to the clavaminate synthase family. The cofactor is Fe(2+).

It carries out the reaction L-lysine + 2-oxoglutarate + O2 = (4R)-4-hydroxy-L-lysine + succinate + CO2. In terms of biological role, alpha-ketoglutarate-dependent dioxygenase that in vitro catalyzes the regio- and stereoselective hydroxylation of L-lysine, leading to (4R)-4-hydroxy-L-lysine. The protein is L-lysine 4-hydroxylase of Niastella koreensis (strain DSM 17620 / KACC 11465 / NBRC 106392 / GR20-10).